The following is a 131-amino-acid chain: Cyclin-dependent kinase 4 inhibitor B (131 aa).

ANK repeat units lie at residues 6–35 (GGDA…DPNR), 39–67 (FGRR…DPNC), 72–101 (TLTR…RLDV), and 105–131 (WGRL…TAGD).

Belongs to the CDKN2 cyclin-dependent kinase inhibitor family. Heterodimer of CDKN2B with CDK4 or CDK6.

Functionally, interacts strongly with CDK4 and CDK6. Potent inhibitor. Potential effector of TGF-beta induced cell cycle arrest. This is Cyclin-dependent kinase 4 inhibitor B (CDKN2B) from Bos taurus (Bovine).